We begin with the raw amino-acid sequence, 916 residues long: Translation initiation factor IF-2 (916 aa).

Residues 151–191 (NLDEQQRLAESDRARDEAIQRKRDEEQAAKDRVEAERKAAE) are compositionally biased toward basic and acidic residues. Disordered stretches follow at residues 151–262 (NLDE…SHVM) and 280–328 (HLSA…ERPT). Composition is skewed to low complexity over residues 192–243 (EAAA…ATPA) and 293–305 (RGKPTGRPGSSSS). Residues 415 to 584 (SRPPVVTIMG…SLQAEVLELK (170 aa)) form the tr-type G domain. The G1 stretch occupies residues 424 to 431 (GHVDHGKT). Residue 424-431 (GHVDHGKT) coordinates GTP. Positions 449 to 453 (GITQH) are G2. Residues 470–473 (DTPG) form a G3 region. GTP contacts are provided by residues 470 to 474 (DTPGH) and 524 to 527 (NKID). Residues 524–527 (NKID) form a G4 region. A G5 region spans residues 560–562 (SAK).

This sequence belongs to the TRAFAC class translation factor GTPase superfamily. Classic translation factor GTPase family. IF-2 subfamily.

The protein resides in the cytoplasm. Its function is as follows. One of the essential components for the initiation of protein synthesis. Protects formylmethionyl-tRNA from spontaneous hydrolysis and promotes its binding to the 30S ribosomal subunits. Also involved in the hydrolysis of GTP during the formation of the 70S ribosomal complex. The protein is Translation initiation factor IF-2 of Xanthomonas campestris pv. campestris (strain B100).